The primary structure comprises 331 residues: 4-hydroxythreonine-4-phosphate dehydrogenase (331 aa).

Substrate contacts are provided by His-137 and Thr-138. A divalent metal cation is bound by residues His-167, His-212, and His-267. 3 residues coordinate substrate: Lys-275, Asn-284, and Arg-293.

It belongs to the PdxA family. In terms of assembly, homodimer. The cofactor is Zn(2+). Mg(2+) is required as a cofactor. Co(2+) serves as cofactor.

It localises to the cytoplasm. It carries out the reaction 4-(phosphooxy)-L-threonine + NAD(+) = 3-amino-2-oxopropyl phosphate + CO2 + NADH. It participates in cofactor biosynthesis; pyridoxine 5'-phosphate biosynthesis; pyridoxine 5'-phosphate from D-erythrose 4-phosphate: step 4/5. Its function is as follows. Catalyzes the NAD(P)-dependent oxidation of 4-(phosphooxy)-L-threonine (HTP) into 2-amino-3-oxo-4-(phosphooxy)butyric acid which spontaneously decarboxylates to form 3-amino-2-oxopropyl phosphate (AHAP). The polypeptide is 4-hydroxythreonine-4-phosphate dehydrogenase (Yersinia enterocolitica serotype O:8 / biotype 1B (strain NCTC 13174 / 8081)).